Here is a 29-residue protein sequence, read N- to C-terminus: Trypsin inhibitor 2 (29 aa).

Disulfide bonds link C3-C20, C10-C22, and C16-C28.

Belongs to the protease inhibitor I7 (squash-type serine protease inhibitor) family.

The protein resides in the secreted. Its function is as follows. Inhibits trypsin. The polypeptide is Trypsin inhibitor 2 (Bryonia dioica (Red bryony)).